Reading from the N-terminus, the 472-residue chain is Argininosuccinate lyase (472 aa).

This sequence belongs to the lyase 1 family. Argininosuccinate lyase subfamily.

The protein localises to the cytoplasm. The enzyme catalyses 2-(N(omega)-L-arginino)succinate = fumarate + L-arginine. The protein operates within amino-acid biosynthesis; L-arginine biosynthesis; L-arginine from L-ornithine and carbamoyl phosphate: step 3/3. The polypeptide is Argininosuccinate lyase (Polynucleobacter asymbioticus (strain DSM 18221 / CIP 109841 / QLW-P1DMWA-1) (Polynucleobacter necessarius subsp. asymbioticus)).